Consider the following 607-residue polypeptide: Matrix metalloproteinase-16 (607 aa).

Residues 1–31 form the signal peptide; the sequence is MILLAFSSGRRLDFVHRSGVFFLQTLLWILC. Residues 32-119 constitute a propeptide that is removed on maturation; sequence ATVCGTEQYF…SSKFNIRRKR (88 aa). N-linked (GlcNAc...) asparagine glycosylation occurs at Asn-83. Residues 99–106 carry the Cysteine switch motif; the sequence is PRCGVPDQ. Residue Cys-101 participates in Zn(2+) binding. The Extracellular segment spans residues 120 to 564; it reads YALTGQKWQH…LDNTASTVKA (445 aa). Ca(2+) is bound at residue Asp-183. Positions 193 and 195 each coordinate Zn(2+). Asp-200, Gly-201, Gly-203, and Phe-205 together coordinate Ca(2+). Residue His-208 participates in Zn(2+) binding. Residues Gly-215, Gly-217, and Asp-219 each contribute to the Ca(2+) site. Zn(2+) is bound at residue His-221. Ca(2+) contacts are provided by Asp-223 and Glu-226. His-246 lines the Zn(2+) pocket. Residue Glu-247 is part of the active site. His-250 and His-256 together coordinate Zn(2+). The disordered stretch occupies residues 281-340; sequence DDLQGIQKIYGPPDKIPPPTRPLPTVPPHRSVPPADPRRHDRPKPPRPPTGRPSYPGAKP. Over residues 294 to 315 the composition is skewed to pro residues; that stretch reads DKIPPPTRPLPTVPPHRSVPPA. 4 Hemopexin repeats span residues 340-388, 389-434, 436-484, and 485-532; these read PNIC…WRGL, PPSI…GNGI, PHGI…KGIP, and ESPQ…FMGC. Cysteines 343 and 532 form a disulfide. A helical membrane pass occupies residues 565–585; sequence IAIVIPCILALCLLVLVYTVF. The Cytoplasmic segment spans residues 586–607; the sequence is QFKRKGTPRHILYCKRSMQEWV.

This sequence belongs to the peptidase M10A family. In terms of assembly, interacts with CSPG4 through CSPG4 chondroitin sulfate glycosaminoglycan. The cofactor is Zn(2+). Requires Ca(2+) as cofactor. In terms of processing, the precursor is cleaved by a furin endopeptidase.

The protein resides in the cell membrane. In terms of biological role, endopeptidase that degrades various components of the extracellular matrix, such as collagen type III and fibronectin. Activates progelatinase A. Involved in the matrix remodeling of blood vessels. It has no effect on type I, II, IV and V collagen. However, upon interaction with CSPG4, it may be involved in degradation and invasion of type I collagen by melanoma cells. The sequence is that of Matrix metalloproteinase-16 (Mmp16) from Mus musculus (Mouse).